The chain runs to 181 residues: NADH-quinone oxidoreductase subunit B (181 aa).

[4Fe-4S] cluster contacts are provided by C45, C46, C111, and C140.

The protein belongs to the complex I 20 kDa subunit family. NDH-1 is composed of 15 different subunits. Subunits NuoB, C, D, E, F, and G constitute the peripheral sector of the complex. The cofactor is [4Fe-4S] cluster.

It is found in the cell membrane. The catalysed reaction is a quinone + NADH + 5 H(+)(in) = a quinol + NAD(+) + 4 H(+)(out). NDH-1 shuttles electrons from NADH, via FMN and iron-sulfur (Fe-S) centers, to quinones in the respiratory chain. The immediate electron acceptor for the enzyme in this species is believed to be a menaquinone. Couples the redox reaction to proton translocation (for every two electrons transferred, four hydrogen ions are translocated across the cytoplasmic membrane), and thus conserves the redox energy in a proton gradient. The chain is NADH-quinone oxidoreductase subunit B from Deinococcus radiodurans (strain ATCC 13939 / DSM 20539 / JCM 16871 / CCUG 27074 / LMG 4051 / NBRC 15346 / NCIMB 9279 / VKM B-1422 / R1).